We begin with the raw amino-acid sequence, 309 residues long: Homoserine kinase (309 aa).

ATP is bound at residue 91-101; sequence PIGSGLGSSAC.

It belongs to the GHMP kinase family. Homoserine kinase subfamily.

The protein localises to the cytoplasm. The enzyme catalyses L-homoserine + ATP = O-phospho-L-homoserine + ADP + H(+). The protein operates within amino-acid biosynthesis; L-threonine biosynthesis; L-threonine from L-aspartate: step 4/5. In terms of biological role, catalyzes the ATP-dependent phosphorylation of L-homoserine to L-homoserine phosphate. This chain is Homoserine kinase, found in Klebsiella pneumoniae subsp. pneumoniae (strain ATCC 700721 / MGH 78578).